The primary structure comprises 376 residues: Endoplasmic reticulum-Golgi intermediate compartment protein 2 (376 aa).

Residues 1–33 lie on the Cytoplasmic side of the membrane; it reads MRRLNKKKALNFVRELDAFPKVPESYVETTASG. The helical transmembrane segment at 34–54 threads the bilayer; that stretch reads GTVSLLAFTAMALLAFFEFFV. The Lumenal segment spans residues 55–318; it reads YRDTWMKYEY…PFWQFLVRLC (264 aa). The helical transmembrane segment at 319–339 threads the bilayer; the sequence is GIIGGIFSTTGMLHNLVGFCV. Residues 340–376 are Cytoplasmic-facing; it reads DVVCCRFKLGVYKPKSMSDFDGQINSLTPLLSENAEQ.

It belongs to the ERGIC family.

The protein localises to the endoplasmic reticulum-Golgi intermediate compartment membrane. Its subcellular location is the golgi apparatus. It is found in the cis-Golgi network membrane. It localises to the endoplasmic reticulum membrane. Its function is as follows. Possible role in transport between endoplasmic reticulum and Golgi. The chain is Endoplasmic reticulum-Golgi intermediate compartment protein 2 (ergic2) from Danio rerio (Zebrafish).